A 466-amino-acid chain; its full sequence is Integrin-linked protein kinase homolog pat-4 (466 aa).

ANK repeat units follow at residues 50–79, 83–112, and 116–145; these read HAFS…RVNS, GDDT…DVNA, and HGMT…AVNV. The 256-residue stretch at 210 to 465 folds into the Protein kinase domain; it reads LNLITKIAES…QIIPILERMI (256 aa).

Belongs to the protein kinase superfamily. TKL Ser/Thr protein kinase family. In terms of assembly, interacts (via protein kinase domain) with unc-112 (via N-terminus). Interacts (via ANK repeats) with unc-97 (via first LIM domain). Interacts (via protein kinase domain) with pat-6 (via C-terminus CH domain). May form a complex with unc-112, unc-97 and pat-6. Does not interact with integrin pat-3. Component of an integrin containing attachment complex, composed of at least pat-2, pat-3, pat-4, pat-6, unc-52, unc-97 and unc-112. In terms of tissue distribution, expressed in body wall muscle.

Its subcellular location is the cytoplasm. The protein localises to the myofibril. It is found in the sarcomere. It localises to the m line. The protein resides in the basal cell membrane. In terms of biological role, probable pseudokinase that acts as an adapter protein. Component of an integrin containing attachment complex, which is required for muscle development and maintenance. Involved in the assembly of dense bodies and M lines during body wall muscle development by recruiting several of their components including integrin pat-3, cpna-1, unc-89 and unc-112 to integrin-mediated attachment sites. Plays a role in distal tip cell (DTC) migration and in oocyte development probably by regulating the actin cytoskeleton. During the formation of neuromuscular junctions at the larval stage, negatively regulates membrane protrusion from body wall muscles. May be involved in thermotolerance and lifespan. This Caenorhabditis elegans protein is Integrin-linked protein kinase homolog pat-4.